A 1746-amino-acid chain; its full sequence is MSACNTFTEHVWKPGECKNCFKPKSLHQLPPDPEKAPITHGNVKTNANHSNNHRIRNTGNFRPPVAKKPTIAVKPTMIVADGQSICGELSIQEHCENKPVIIGWNRNRAALSQKPLNNNNEDDEGISHVPKPYGNNDSAKKMSDNNNGLTEVLKEIAGLDTAPQIRGNETNSRETFLGRINDCYKRSLERKLPPSCMIGGIKETQGKHVILSGSTEVISNEGGRFCYPEFSSGEESEEDVLFSNMEEEHESWDESDEELLAMEIRMRGQPRFANFRANTLSPVRFFVDKKWNTIPLRNKSLQRICAVDYDDSYDEILNGYEENSVVSYGQGSIQSMVSSDSTSPDSSLTEESRSETASSLSQKICNGGLSPGNPGDSKDMKEIEPNYESPSSNNQDKDSSQASKSSIKVPETHKAVLALRLEEKDGKIAVQTEKEESKASTDVAGQAVTINLVPTEEQAKPYRVVNLEQPLCKPYTVVDVSAAMASEHLEGPVNSPKTKSSSSTPNSPVTSSSLTPGQISAHFQKSSAIRYQEVWTSSTSPRQKIPKVELITSGTGPNVPPRKNCHKSAPTSPTATNISSKTIPVKSPNLSEIKFNSYNNAGMPPFPIIIHDEPTYARSSKNAIKVPIVINPNAYDNLAIYKSFLGTSGELSVKEKTTSVISHTYEEIETESKVPDNTTSKTTDCLQTKGFSNSTEHKRGSVAQKVQEFNNCLNRGQSSPQRSYSSSHSSPAKIQRATQEPVAKIEGTQESQMVGSSSTREKASTVLSQIVASIQPPQSPPETPQSGPKACSVEELYAIPPDADVAKSTPKSTPVRPKSLFTSQPSGEAEAPQTTDSPTTKVQKDPSIKPVTPSPSKLVTSPQSEPPAPFPPPRSTSSPYHAGNLLQRHFTNWTKPTSPTRSTEAESVLHSEGSRRAADAKPKRWISFKSFFRRRKTDEEDDKEKEREKGKLVGLDGTVIHMLPPPPVQRHHWFTEAKGESSEKPAIVFMYRCDPAQGQLSVDQSKARTDQAAVMEKGRAENALLQDSEKKRSHSSPSQIPKKILSHMTHEVTEDFSPRDPRTVVGKQDGRGCTSVTTALSLPELEREDGKEDISDPMDPNPCSATYSNLGQSRAAMIPPKQPRQPKGAVDDAIAFGGKTDQEAPNASQPTPPPLPKKMIIRANTEPISKDLQKSMESSLCVMANPTYDIDPNWDASSAGSSISYELKGLDIESYDSLERPLRKERPVPSAANSISSLTTLSIKDRFSNSMESLSSRRGPSCRQGRGIQKPQRQALYRGLENREEVVGKIRSLHTDALKKLAVKCEDLFMAGQKDQLRFGVDSWSDFRLTSDKPCCEAGDAVYYTASYAKDPLNNYAVKICKSKAKESQQYYHSLAVRQSLAVHFNIQQDCGHFLAEVPNRLLPWEDPDDPEKDEDDMEETEEDAKGETDGKNPKPCSEAASSQKENQGVMSKKQRSHVVVITREVPCLTVADFVRDSLAQHGKSPDLYERQVCLLLLQLCSGLEHLKPYHVTHCDLRLENLLLVHYQPGGTAQGFGPAEPSPTSSYPTRLIVSNFSQAKQKSHLVDPEILRDQSRLAPEIITATQYKKCDEFQTGILIYEMLHLPNPFDENPELKEREYTRADLPRIPFRSPYSRGLQQLASCLLNPNPSERILISDAKGILQCLLWGPREDLFQTFTACPSLVQRNTLLQNWLDIKRTLLMIKFAEKSLDREGGISLEDWLCAQYLAFATTDSLSCIVKILQHR.

The segment at 44–66 is disordered; the sequence is KTNANHSNNHRIRNTGNFRPPVA. Ser-281 carries the post-translational modification Phosphoserine. Disordered regions lie at residues 334–411 and 489–517; these read QSMV…KVPE and LEGP…LTPG. Low complexity predominate over residues 338 to 349; sequence SSDSTSPDSSLT. Residues 355-364 are compositionally biased toward polar residues; sequence ETASSLSQKI. Low complexity predominate over residues 492-513; the sequence is PVNSPKTKSSSSTPNSPVTSSS. Residues Ser-540, Ser-572, and Ser-587 each carry the phosphoserine modification. The interval 551-577 is disordered; that stretch reads ITSGTGPNVPPRKNCHKSAPTSPTATN. Phosphotyrosine occurs at positions 635 and 641. At Ser-648 the chain carries Phosphoserine. Tyr-665 bears the Phosphotyrosine mark. Disordered regions lie at residues 671 to 700, 713 to 764, 802 to 920, 1052 to 1102, and 1138 to 1158; these read ESKV…HKRG, LNRG…EKAS, DADV…AADA, VTED…DPNP, and GKTD…LPKK. The segment covering 675–694 has biased composition (polar residues); that stretch reads PDNTTSKTTDCLQTKGFSNS. The segment covering 718 to 730 has biased composition (low complexity); it reads SSPQRSYSSSHSS. Composition is skewed to polar residues over residues 748-758 and 820-841; these read TQESQMVGSSS and LFTS…PTTK. 2 positions are modified to phosphoserine: Ser-826 and Ser-854. The span at 864-874 shows a compositional bias: pro residues; sequence SEPPAPFPPPR. Residues 889–902 show a composition bias toward polar residues; it reads HFTNWTKPTSPTRS. The residue at position 898 (Ser-898) is a Phosphoserine. Composition is skewed to basic and acidic residues over residues 903-920, 1052-1062, and 1084-1094; these read TEAE…AADA, VTEDFSPRDPR, and ELEREDGKEDI. The residue at position 1151 (Thr-1151) is a Phosphothreonine. Tyr-1188 is modified (phosphotyrosine). Residues 1285-1311 are required for homodimerization; the sequence is EVVGKIRSLHTDALKKLAVKCEDLFMA. One can recognise a Protein kinase domain in the interval 1313 to 1675; that stretch reads QKDQLRFGVD…LLWGPREDLF (363 aa). Ser-1374 is modified (phosphoserine). The segment at 1402–1456 is disordered; that stretch reads LLPWEDPDDPEKDEDDMEETEEDAKGETDGKNPKPCSEAASSQKENQGVMSKKQR. Residues 1406 to 1423 are compositionally biased toward acidic residues; sequence EDPDDPEKDEDDMEETEE. Residues 1424-1433 are compositionally biased toward basic and acidic residues; it reads DAKGETDGKN. Residues 1440–1450 are compositionally biased toward polar residues; sequence AASSQKENQGV. Positions 1670-1743 are required for homodimerization; that stretch reads PREDLFQTFT…DSLSCIVKIL (74 aa).

This sequence belongs to the protein kinase superfamily. Homodimer. Interacts with BCAR1 and CRK. Interacts with PRAG1. Interacts (when phosphorylated at Tyr-1188) with SHC1 (via PID domain). Found in a complex with PPP1CA, PPP1CC, SHC1 and PEAK1. Interacts (when phosphorylated at Tyr-635) with tensin TNS3 (when phosphorylated on the SH2 domain); TNS3 also interacts with integrins ITGB1, ITGB3 and ITGB5 and mediates their association with PEAK1. Interacts with RASAL2 and GRB2. In terms of processing, phosphorylated on tyrosine in a CSK-dependent manner in response to adhesion to fibronectin and to EGF stimulation. Phosphorylation at Tyr-665 by a Src family kinase controls subcellular localization to focal adhesion and focal adhesion dynamics. Phosphorylation at Tyr-1188 is essential for binding to SHC1. Phosphorylation at Tyr-635 promotes interaction with tensin TNS3.

It localises to the cytoplasm. It is found in the cytoskeleton. The protein resides in the cell junction. The protein localises to the focal adhesion. Its function is as follows. Probable catalytically inactive kinase. Scaffolding protein that regulates the cytoskeleton to control cell spreading and migration by modulating focal adhesion dynamics. Acts as a scaffold for mediating EGFR signaling. This chain is Inactive tyrosine-protein kinase PEAK1 (PEAK1), found in Homo sapiens (Human).